The primary structure comprises 466 residues: Soluble pyridine nucleotide transhydrogenase (466 aa).

Residue 36-45 (ERYNNVGGGC) participates in FAD binding.

The protein belongs to the class-I pyridine nucleotide-disulfide oxidoreductase family. FAD is required as a cofactor.

The protein resides in the cytoplasm. It catalyses the reaction NAD(+) + NADPH = NADH + NADP(+). Functionally, conversion of NADPH, generated by peripheral catabolic pathways, to NADH, which can enter the respiratory chain for energy generation. This is Soluble pyridine nucleotide transhydrogenase from Yersinia pseudotuberculosis serotype O:1b (strain IP 31758).